A 366-amino-acid chain; its full sequence is tRNA 2-selenouridine synthase (366 aa).

One can recognise a Rhodanese domain in the interval 12–136 (FLSGTPMMDV…MRGFLIDVIE (125 aa)). C95 acts as the S-selanylcysteine intermediate in catalysis.

It belongs to the SelU family. As to quaternary structure, monomer.

The catalysed reaction is 5-methylaminomethyl-2-thiouridine(34) in tRNA + selenophosphate + (2E)-geranyl diphosphate + H2O + H(+) = 5-methylaminomethyl-2-selenouridine(34) in tRNA + (2E)-thiogeraniol + phosphate + diphosphate. It carries out the reaction 5-methylaminomethyl-2-thiouridine(34) in tRNA + (2E)-geranyl diphosphate = 5-methylaminomethyl-S-(2E)-geranyl-thiouridine(34) in tRNA + diphosphate. It catalyses the reaction 5-methylaminomethyl-S-(2E)-geranyl-thiouridine(34) in tRNA + selenophosphate + H(+) = 5-methylaminomethyl-2-(Se-phospho)selenouridine(34) in tRNA + (2E)-thiogeraniol. The enzyme catalyses 5-methylaminomethyl-2-(Se-phospho)selenouridine(34) in tRNA + H2O = 5-methylaminomethyl-2-selenouridine(34) in tRNA + phosphate. Its function is as follows. Involved in the post-transcriptional modification of the uridine at the wobble position (U34) of tRNA(Lys), tRNA(Glu) and tRNA(Gln). Catalyzes the conversion of 2-thiouridine (S2U-RNA) to 2-selenouridine (Se2U-RNA). Acts in a two-step process involving geranylation of 2-thiouridine (S2U) to S-geranyl-2-thiouridine (geS2U) and subsequent selenation of the latter derivative to 2-selenouridine (Se2U) in the tRNA chain. The chain is tRNA 2-selenouridine synthase from Cupriavidus pinatubonensis (strain JMP 134 / LMG 1197) (Cupriavidus necator (strain JMP 134)).